Consider the following 873-residue polypeptide: Leucine--tRNA ligase (873 aa).

The 'HIGH' region motif lies at 42-52; that stretch reads PYPSGKLHMGH. The interval 624–643 is disordered; that stretch reads PVEIGGTEKMSKSKNNGVDP. The short motif at 632–636 is the 'KMSKS' region element; it reads KMSKS. Lysine 635 contacts ATP.

It belongs to the class-I aminoacyl-tRNA synthetase family.

The protein localises to the cytoplasm. The catalysed reaction is tRNA(Leu) + L-leucine + ATP = L-leucyl-tRNA(Leu) + AMP + diphosphate. This chain is Leucine--tRNA ligase, found in Pseudomonas aeruginosa (strain ATCC 15692 / DSM 22644 / CIP 104116 / JCM 14847 / LMG 12228 / 1C / PRS 101 / PAO1).